We begin with the raw amino-acid sequence, 258 residues long: L-rhamnose-1-dehydrogenase (258 aa).

3 residues coordinate NADP(+): Ile-19, Asp-68, and Asn-95. Residues Ser-147 and Tyr-161 each act as proton donor in the active site. 4 residues coordinate NADP(+): Tyr-161, Lys-165, Ile-194, and Thr-196. Catalysis depends on Lys-165, which acts as the Lowers pKa of active site Tyr.

It belongs to the short-chain dehydrogenases/reductases (SDR) family.

It carries out the reaction L-rhamnofuranose + NAD(+) = L-rhamnono-1,4-lactone + NADH + H(+). NAD-dependent dehydrogenase that has high activity with L-rhamnose and L-lyxose, and shows only low activity with L-mannose. Has no activity with NADP. Catalyzes the first step in an alternative pathway for rhamnose utilization that does not involve phosphorylated intermediates. This Scheffersomyces stipitis (strain ATCC 58785 / CBS 6054 / NBRC 10063 / NRRL Y-11545) (Yeast) protein is L-rhamnose-1-dehydrogenase (DHG2).